Reading from the N-terminus, the 266-residue chain is MLTFIGLGLFDEYDISLKGLEAVKEADLVYAEFYTSCLMGTNPEKMEKLYGKKVHLLSREDVEQHPDWLDNARDKKVAFLTGGDTMVSTTHVDLRLRAEKLGIETRLIHGASITSAVSGLTGLQNYRFGKSASIPYPYESRRGTKVISETPYDTIKQNSSFGLHTLVFLDIDKDKGFMSVNIALKLLLEVESKRGEGVMDRAVAVGIARAGSEKPVVKAGYAEDLKGFDFGKPLHILVVPGKLHFLEAEALVKLADGPEEIMENIE.

S-adenosyl-L-methionine contacts are provided by residues L9, D84, V87, 112 to 113 (SI), L169, A210, and H235.

The protein belongs to the diphthine synthase family. In terms of assembly, homodimer.

The catalysed reaction is 2-[(3S)-amino-3-carboxypropyl]-L-histidyl-[translation elongation factor 2] + 3 S-adenosyl-L-methionine = diphthine-[translation elongation factor 2] + 3 S-adenosyl-L-homocysteine + 3 H(+). It participates in protein modification; peptidyl-diphthamide biosynthesis. In terms of biological role, S-adenosyl-L-methionine-dependent methyltransferase that catalyzes the trimethylation of the amino group of the modified target histidine residue in translation elongation factor 2 (EF-2), to form an intermediate called diphthine. The three successive methylation reactions represent the second step of diphthamide biosynthesis. The sequence is that of Diphthine synthase from Methanosarcina mazei (strain ATCC BAA-159 / DSM 3647 / Goe1 / Go1 / JCM 11833 / OCM 88) (Methanosarcina frisia).